The primary structure comprises 276 residues: Phosphatidylglycerol--prolipoprotein diacylglyceryl transferase (276 aa).

7 consecutive transmembrane segments (helical) span residues 17–37 (FGPF…VLGW), 59–79 (FLSW…ILFY), 94–114 (VWDG…AILI), 132–152 (VPVP…GELW), 177–197 (PSEL…LLIA), 208–225 (GYLG…RTTA), and 235–255 (LGYL…MIVI). Residue Arg142 participates in a 1,2-diacyl-sn-glycero-3-phospho-(1'-sn-glycerol) binding.

This sequence belongs to the Lgt family.

It is found in the cell inner membrane. It carries out the reaction L-cysteinyl-[prolipoprotein] + a 1,2-diacyl-sn-glycero-3-phospho-(1'-sn-glycerol) = an S-1,2-diacyl-sn-glyceryl-L-cysteinyl-[prolipoprotein] + sn-glycerol 1-phosphate + H(+). It functions in the pathway protein modification; lipoprotein biosynthesis (diacylglyceryl transfer). Its function is as follows. Catalyzes the transfer of the diacylglyceryl group from phosphatidylglycerol to the sulfhydryl group of the N-terminal cysteine of a prolipoprotein, the first step in the formation of mature lipoproteins. This chain is Phosphatidylglycerol--prolipoprotein diacylglyceryl transferase, found in Acidiphilium cryptum (strain JF-5).